A 701-amino-acid chain; its full sequence is Rab-like protein 6 (701 aa).

Met1 carries the N-acetylmethionine modification. The small GTPase-like stretch occupies residues Gly39–Ser279. GTP is bound by residues Gly50–Thr57, Asp100–Lys104, and Tyr177–Asp179. Residues Ser279–Leu701 are disordered. Low complexity predominate over residues Ser284–Ser315. A compositionally biased stretch (pro residues) spans Thr316–Pro344. A phosphoserine mark is found at Ser394, Ser416, Ser418, Ser461, and Ser462. Residues Ala495 to Ala506 are compositionally biased toward low complexity. Phosphoserine is present on Ser552. The segment covering Asp555–Leu569 has biased composition (basic and acidic residues). A Phosphoserine modification is found at Ser570. Thr573 bears the Phosphothreonine mark. Residues Val580 to Leu589 show a composition bias toward pro residues. Residues Glu608–Lys626 show a composition bias toward basic and acidic residues. Residues Ser614 and Ser615 each carry the phosphoserine modification. An interaction with CDKN2A region spans residues Lys629 to Arg667. Residues Ala643–Arg653 are compositionally biased toward basic residues. Residues Glu654 to Arg665 are compositionally biased toward basic and acidic residues. Positions Leu683–Leu701 are enriched in gly residues.

Belongs to the small GTPase superfamily. Rab family.

The protein localises to the nucleus. It is found in the cytoplasm. Its function is as follows. May enhance cellular proliferation. May reduce growth inhibitory activity of CDKN2A. The polypeptide is Rab-like protein 6 (RABL6) (Bos taurus (Bovine)).